We begin with the raw amino-acid sequence, 278 residues long: Achaete-scute homolog 5 (278 aa).

The tract at residues 1–66 (MPMGAAERGA…GPFGGGLALG (66 aa)) is disordered. Residues 155–207 (AFIQKRNERERQRVKCVNEGYARLRGHLPGALAEKRLSKVETLRAAIRYIKYL) form the bHLH domain. Residues 214–278 (APDGSTPPAS…PFLESEESWH (65 aa)) are disordered. The segment covering 230–239 (GPCPAPPATP) has biased composition (pro residues). The segment covering 240–249 (RPDRPGDGEA) has biased composition (basic and acidic residues). Over residues 252–271 (PSSLVPESSESSCFSPSPFL) the composition is skewed to low complexity.

Interacts with transcription factor TCF3/E12.

It localises to the nucleus. Its function is as follows. Transcription factor. Probably binds E-box motifs 5'-CANNTG-3' in complex with transcription factor TCF3/E12. Negatively modulates transcription of target genes such as CDH1/E-cadherin, perhaps by recruiting the PRC2 repressive complex to regulatory elements. Regulates ameloblast development and tooth germ growth, perhaps acting by positively modulating migration of inner enamel epithelium (IEE) cells. Plays a role in enamel formation. This chain is Achaete-scute homolog 5 (ASCL5), found in Homo sapiens (Human).